A 223-amino-acid chain; its full sequence is Probable transaldolase (223 aa).

Catalysis depends on K91, which acts as the Schiff-base intermediate with substrate.

The protein belongs to the transaldolase family. Type 3B subfamily.

Its subcellular location is the cytoplasm. The catalysed reaction is D-sedoheptulose 7-phosphate + D-glyceraldehyde 3-phosphate = D-erythrose 4-phosphate + beta-D-fructose 6-phosphate. The protein operates within carbohydrate degradation; pentose phosphate pathway; D-glyceraldehyde 3-phosphate and beta-D-fructose 6-phosphate from D-ribose 5-phosphate and D-xylulose 5-phosphate (non-oxidative stage): step 2/3. In terms of biological role, transaldolase is important for the balance of metabolites in the pentose-phosphate pathway. The sequence is that of Probable transaldolase from Chlorobium phaeobacteroides (strain BS1).